We begin with the raw amino-acid sequence, 387 residues long: Cysteine desulfurase IscS (387 aa).

Pyridoxal 5'-phosphate-binding positions include alanine 73 to threonine 74, asparagine 155, glutamine 183, and serine 203 to histidine 205. Residue lysine 206 is modified to N6-(pyridoxal phosphate)lysine. Residue threonine 241 participates in pyridoxal 5'-phosphate binding. Cysteine 328 functions as the Cysteine persulfide intermediate in the catalytic mechanism. Cysteine 328 contacts [2Fe-2S] cluster.

This sequence belongs to the class-V pyridoxal-phosphate-dependent aminotransferase family. NifS/IscS subfamily. Homodimer. Forms a heterotetramer with IscU, interacts with other sulfur acceptors. Pyridoxal 5'-phosphate is required as a cofactor.

It is found in the cytoplasm. The catalysed reaction is (sulfur carrier)-H + L-cysteine = (sulfur carrier)-SH + L-alanine. The protein operates within cofactor biosynthesis; iron-sulfur cluster biosynthesis. In terms of biological role, master enzyme that delivers sulfur to a number of partners involved in Fe-S cluster assembly, tRNA modification or cofactor biosynthesis. Catalyzes the removal of elemental sulfur atoms from cysteine to produce alanine. Functions as a sulfur delivery protein for Fe-S cluster synthesis onto IscU, an Fe-S scaffold assembly protein, as well as other S acceptor proteins. This is Cysteine desulfurase IscS from Helicobacter pylori (strain ATCC 700392 / 26695) (Campylobacter pylori).